The sequence spans 203 residues: IMP cyclohydrolase (203 aa).

It belongs to the archaeal IMP cyclohydrolase family.

It carries out the reaction IMP + H2O = 5-formamido-1-(5-phospho-D-ribosyl)imidazole-4-carboxamide. The protein operates within purine metabolism; IMP biosynthesis via de novo pathway; IMP from 5-formamido-1-(5-phospho-D-ribosyl)imidazole-4-carboxamide: step 1/1. Its function is as follows. Catalyzes the cyclization of 5-formylamidoimidazole-4-carboxamide ribonucleotide to IMP. This Methanococcus aeolicus (strain ATCC BAA-1280 / DSM 17508 / OCM 812 / Nankai-3) protein is IMP cyclohydrolase.